The chain runs to 384 residues: BarH-like 2 homeobox protein (384 aa).

3 disordered regions span residues 1 to 134 (MTAM…APRT), 154 to 235 (CAPY…ARTA), and 364 to 384 (PGGQ…PHPR). Composition is skewed to low complexity over residues 101-110 (VPAQSLQPSP) and 119-134 (QSAA…APRT). The segment covering 157–175 (YSTSVSSPHHTPKQESNAA) has biased composition (polar residues). Positions 177 to 217 (ESFRPKLEQEDGKTKLDKREDPQSDIKCHGTKEEGDREITS) are enriched in basic and acidic residues. The homeobox DNA-binding region spans 229–288 (PRKARTAFSDHQLNQLERSFERQKYLSVQDRMDLAAALNLTDTQVKTWYQNRRTKWKRQT).

The protein belongs to the BAR homeobox family.

The protein resides in the nucleus. Potential regulator of neural basic helix-loop-helix genes. It may down-regulate expression of ASCL1 and, within the thalamus, up-regulate NGN2, thereby regulating distinct patterns of neuronal differentiation. The polypeptide is BarH-like 2 homeobox protein (Barhl2) (Mus musculus (Mouse)).